The following is a 221-amino-acid chain: Iron-sulfur cluster repair protein YtfE (221 aa).

Belongs to the RIC family. YtfE subfamily. In terms of assembly, homodimer.

Its subcellular location is the cytoplasm. Its function is as follows. Di-iron-containing protein involved in the repair of iron-sulfur clusters damaged by oxidative and nitrosative stress conditions. The sequence is that of Iron-sulfur cluster repair protein YtfE from Cronobacter sakazakii (strain ATCC BAA-894) (Enterobacter sakazakii).